The chain runs to 74 residues: Guanine nucleotide-binding protein G(T) subunit gamma-T1 (74 aa).

Cys71 is subject to Cysteine methyl ester. Cys71 is lipidated: S-farnesyl cysteine. A propeptide spans 72–74 (VIS) (removed in mature form).

The protein belongs to the G protein gamma family. G proteins are composed of 3 units, alpha, beta and gamma. As to expression, retinal rod outer segment.

It localises to the cell membrane. Its function is as follows. Guanine nucleotide-binding proteins (G proteins) are involved as a modulator or transducer in various transmembrane signaling systems. The beta and gamma chains are required for the GTPase activity, for replacement of GDP by GTP, and for G protein-effector interaction. This chain is Guanine nucleotide-binding protein G(T) subunit gamma-T1 (Gngt1), found in Mus musculus (Mouse).